Consider the following 569-residue polypeptide: Arginine--tRNA ligase (569 aa).

The 'HIGH' region motif lies at P123–H133.

Belongs to the class-I aminoacyl-tRNA synthetase family. In terms of assembly, monomer.

The protein resides in the cytoplasm. It catalyses the reaction tRNA(Arg) + L-arginine + ATP = L-arginyl-tRNA(Arg) + AMP + diphosphate. This Fusobacterium nucleatum subsp. nucleatum (strain ATCC 25586 / DSM 15643 / BCRC 10681 / CIP 101130 / JCM 8532 / KCTC 2640 / LMG 13131 / VPI 4355) protein is Arginine--tRNA ligase.